Here is a 471-residue protein sequence, read N- to C-terminus: MTQTAPSSLRSLPPEGAATTNLLDTLQRGLAELDAQGLRRVRRTADTACDAHMRVDGRDIVGFASNDYLGLAAHPALVAAFAEGARRYGSGSGGSHLLGGHSRAHATLEDELAGFAGGFSDAPRALYFSTGYMANLAAMTALTGKHATIFSDALNHASLIDGMRLSRANVQVYPHADMAALAALLDASDAETKLIVSDTVFSMDGDIAPLAELVALAERHGAWLVVDDAHGFGVLGPQGRGALAAAALRSPNLIYVGTLGKAAGVAGAFVIAHETVIEWMIQRARSYIFTTAAPPAVAHAVSASLKVIAGDEGDARRAHLAALIERTRALLRMTRWQPVDSHTAVQPLVIGSNDATLAAMRSLDAHGLWVPAIRPPTVPVGTSRLRVSLSAAHSFDDLARLEAALIEASEGQTRREAEQPPRSLRSLPPEGAAVSVGAARRDAEQPPRSLRSLPPEGAAASLGAARRETAA.

Arg40 is a binding site for substrate. Residue 131–132 coordinates pyridoxal 5'-phosphate; that stretch reads GY. Residue His156 participates in substrate binding. Pyridoxal 5'-phosphate contacts are provided by Ser202, His230, and Thr258. Lys261 is subject to N6-(pyridoxal phosphate)lysine. Thr377 serves as a coordination point for substrate. A disordered region spans residues 409–471; that stretch reads SEGQTRREAE…LGAARRETAA (63 aa).

Belongs to the class-II pyridoxal-phosphate-dependent aminotransferase family. BioF subfamily. In terms of assembly, homodimer. It depends on pyridoxal 5'-phosphate as a cofactor.

The catalysed reaction is 6-carboxyhexanoyl-[ACP] + L-alanine + H(+) = (8S)-8-amino-7-oxononanoate + holo-[ACP] + CO2. It participates in cofactor biosynthesis; biotin biosynthesis. Catalyzes the decarboxylative condensation of pimeloyl-[acyl-carrier protein] and L-alanine to produce 8-amino-7-oxononanoate (AON), [acyl-carrier protein], and carbon dioxide. This Burkholderia ambifaria (strain ATCC BAA-244 / DSM 16087 / CCUG 44356 / LMG 19182 / AMMD) (Burkholderia cepacia (strain AMMD)) protein is 8-amino-7-oxononanoate synthase.